The primary structure comprises 440 residues: Serine/threonine-protein kinase STK11 (440 aa).

One can recognise a Protein kinase domain in the interval 49-309; that stretch reads YLMGDLLGEG…IQQIRQHNWF (261 aa). ATP is bound by residues 55 to 63 and K78; that span reads LGEGSYGKV. D176 functions as the Proton acceptor in the catalytic mechanism. Phosphothreonine; by autocatalysis occurs at positions 336 and 365. Residues 370–440 are disordered; the sequence is VPGQVPEEEA…IRKLSTCKQQ (71 aa). Residues 430 to 440 show a composition bias toward basic residues; it reads KIRKLSTCKQQ. S435 bears the Phosphoserine; by PKA mark.

This sequence belongs to the protein kinase superfamily. CAMK Ser/Thr protein kinase family. LKB1 subfamily. In terms of assembly, catalytic component of a trimeric complex composed of STK11/LKB1, STRAD (STRADA or STRADB) and CAB39/MO25 (CAB39/MO25alpha or CAB39L/MO25beta). The cofactor is Mg(2+). It depends on Mn(2+) as a cofactor. Ubiquitously expressed in all tissues tested. High levels were observed in duodenum and skeletal muscle, lower levels in liver and pancreas.

The protein localises to the nucleus. It localises to the cytoplasm. The enzyme catalyses L-seryl-[protein] + ATP = O-phospho-L-seryl-[protein] + ADP + H(+). It catalyses the reaction L-threonyl-[protein] + ATP = O-phospho-L-threonyl-[protein] + ADP + H(+). Functionally, tumor suppressor serine/threonine-protein kinase that controls the activity of AMP-activated protein kinase (AMPK) family members, thereby playing a role in various processes such as cell metabolism, cell polarity, apoptosis and DNA damage response. Acts by phosphorylating the T-loop of AMPK family proteins, leading to promote their activity. This Gallus gallus (Chicken) protein is Serine/threonine-protein kinase STK11.